The following is a 555-amino-acid chain: MNVNSSSNRGEAILAALKTQFPGAVLDEERQTPEQVTITVKINLLPDVVQYLYYQHDGWLPVLFGNDERTLNGHYAVYYALSMEGAEKCWIVVKALVDADSREFPSVTPRVPAAVWGEREIRDMYGLIPVGLPDQRRLVLPDDWPEDMHPLRKDAMDYRLRPEPTTDSETYPFINEGNSDARVIPVGPLHITSDEPGHFRLFVDGEQIVDADYRLFYVHRGMEKLAETRMGYNEVTFLSDRVCGICGFAHSVAYTNSVENALGIEVPQRAHTIRSILLEVERLHSHLLNLGLSCHFVGFDTGFMQFFRVREKSMTMAELLIGSRKTYGLNLIGGVRRDILKEQRLQTLKLVREMRADVSELVEMLLATPNMEQRTQGIGILDRQIARDLRFDHPYADYGNIPKTLFTFTGGDVFSRVMVRVKETFDSLAMLEFALDNMPDTPLLTEGFSYKPHAFALGFVEAPRGEDVHWSMLGDNQKLFRWRCRAATYANWPVLRYMLRGNTVSDAPLIIGSLDPCYSCTDRVTLVDVRKRQSKTVPYKEIERYGIDRNRSPLK.

This sequence belongs to the complex I 49 kDa subunit family. [4Fe-4S] cluster serves as cofactor.

Functionally, possible component of hydrogenase 4. The chain is Hydrogenase-4 component G from Escherichia coli (strain K12).